A 249-amino-acid chain; its full sequence is 5'-nucleotidase SurE (249 aa).

Positions 8, 9, 39, and 91 each coordinate a divalent metal cation.

This sequence belongs to the SurE nucleotidase family. It depends on a divalent metal cation as a cofactor.

The protein resides in the cytoplasm. The catalysed reaction is a ribonucleoside 5'-phosphate + H2O = a ribonucleoside + phosphate. Its function is as follows. Nucleotidase that shows phosphatase activity on nucleoside 5'-monophosphates. The polypeptide is 5'-nucleotidase SurE (Haemophilus influenzae (strain PittEE)).